Reading from the N-terminus, the 240-residue chain is Aquaporin Z (240 aa).

2 helical membrane-spanning segments follow: residues 10–30 (AIGTFWLTFAGCGSAVIAAGF) and 35–55 (IGLVGVSLAFGLSVVTMAYAI). An NPA 1 motif is present at residues 64-66 (NPA). The next 3 helical transmembrane spans lie at 82-102 (ILPYVIAQVCGAIVAAELLYI), 131-151 (MMACFLTEVVMTMMFLFIIMG), and 160-180 (GFAPLAIGLALVMIHLVSIPV). Residues 186–188 (NPA) carry the NPA 2 motif. Residues 194 to 214 (ALFVGGWAMAQLWLFWVAPLI) traverse the membrane as a helical segment.

This sequence belongs to the MIP/aquaporin (TC 1.A.8) family. In terms of assembly, homotetramer.

It localises to the cell inner membrane. The enzyme catalyses H2O(in) = H2O(out). Functionally, channel that permits osmotically driven movement of water in both directions. It is involved in the osmoregulation and in the maintenance of cell turgor during volume expansion in rapidly growing cells. It mediates rapid entry or exit of water in response to abrupt changes in osmolarity. The sequence is that of Aquaporin Z from Bradyrhizobium diazoefficiens (strain JCM 10833 / BCRC 13528 / IAM 13628 / NBRC 14792 / USDA 110).